The sequence spans 579 residues: Lens epithelium-derived growth factor (579 aa).

The PWWP domain occupies 1–64 (MSRDFKPGDL…PKDIFPYSEN (64 aa)). Disordered regions lie at residues 62 to 81 (SENKDKYGKPNKRKGFNEGL), 88 to 203 (PKVK…EEAA), 215 to 397 (AAPV…SMDS), and 492 to 579 (AEQK…FENK). Positions 94 to 107 (HQPSHPAVNTSIKE) are enriched in polar residues. A compositionally biased stretch (basic and acidic residues) spans 153-173 (KEMHSTKEDEEPSEKNSKEGV). Basic residues predominate over residues 184–193 (VARRGRKRKA). The short motif at 186-196 (RRGRKRKAEKQ) is the Nuclear localization signal element. A compositionally biased stretch (low complexity) spans 215–224 (AAPVTVSPKV). The span at 261–308 (EEEKAKKKGPDEKPKKQGKKDEEGQKEEEKPKKEYDKKDGKKEAEPKR) shows a compositional bias: basic and acidic residues. Residues 321–330 (DSEDEGGEEE) show a composition bias toward acidic residues. Over residues 334–349 (KKKGGRSFQSTHRRNI) the composition is skewed to basic residues. Residues 347 to 442 (RNIMRGQHEK…SMQQAQKHTE (96 aa)) are a coiled coil. Basic and acidic residues-rich tracts occupy residues 352–397 (GQHE…SMDS) and 492–522 (AEQKQHEEANKTKEQWKKGTNKKNEKEKDQT). The tract at residues 387 to 464 (MEKKRETSMD…VSQVIMEKST (78 aa)) is integrase-binding domain (IBD). A compositionally biased stretch (polar residues) spans 530-543 (GSETQDTNQSQHNG). Residues 544 to 579 (ENAEEKDKLEVASKKKTCGEESELEKPAKESAFENK) are compositionally biased toward basic and acidic residues.

This sequence belongs to the HDGF family.

It localises to the nucleus. Its function is as follows. Transcriptional coactivator involved in neuroepithelial stem cell differentiation and neurogenesis. Involved in particular in lens epithelial cell gene regulation and stress responses. May play an important role in lens epithelial to fiber cell terminal differentiation. May play a protective role during stress-induced apoptosis. The protein is Lens epithelium-derived growth factor (PSIP1) of Gallus gallus (Chicken).